The following is a 209-amino-acid chain: MARYKDAVCRLCRREGTKLFLKGPKCFTDKCAIEKRNFAPGQHGKDRKAKIVGYGLQLREKQKTKRMYFAQENQFRNYFEKAAKGQGVTGEMLLQQLERRLDNVVYRLGFASARRQARQLVRHGHIAVNGKKVNIPSYQVSVKDEIAVREGSKEMTLLGQIKELTSHTTVPGWLIVDRDNWKGSVSSLPRRDEIQMPVNEQLIVELYSK.

In terms of domain architecture, S4 RNA-binding spans 99–160; that stretch reads RRLDNVVYRL…GSKEMTLLGQ (62 aa).

This sequence belongs to the universal ribosomal protein uS4 family. In terms of assembly, part of the 30S ribosomal subunit. Contacts protein S5. The interaction surface between S4 and S5 is involved in control of translational fidelity.

Its function is as follows. One of the primary rRNA binding proteins, it binds directly to 16S rRNA where it nucleates assembly of the body of the 30S subunit. With S5 and S12 plays an important role in translational accuracy. This is Small ribosomal subunit protein uS4 from Koribacter versatilis (strain Ellin345).